The primary structure comprises 309 residues: NAD kinase 2 (309 aa).

Aspartate 81 functions as the Proton acceptor in the catalytic mechanism. NAD(+) contacts are provided by residues aspartate 81–glycine 82, asparagine 155–glutamate 156, aspartate 185, threonine 196–serine 201, and asparagine 255.

The protein belongs to the NAD kinase family. It depends on a divalent metal cation as a cofactor.

Its subcellular location is the cytoplasm. It catalyses the reaction NAD(+) + ATP = ADP + NADP(+) + H(+). In terms of biological role, involved in the regulation of the intracellular balance of NAD and NADP, and is a key enzyme in the biosynthesis of NADP. Catalyzes specifically the phosphorylation on 2'-hydroxyl of the adenosine moiety of NAD to yield NADP. In Gloeobacter violaceus (strain ATCC 29082 / PCC 7421), this protein is NAD kinase 2.